The following is a 401-amino-acid chain: Imidazolonepropionase (401 aa).

Positions 66 and 68 each coordinate Fe(3+). 2 residues coordinate Zn(2+): H66 and H68. 4-imidazolone-5-propanoate-binding residues include R75, Y138, and H171. Y138 is a binding site for N-formimidoyl-L-glutamate. H236 lines the Fe(3+) pocket. Residue H236 coordinates Zn(2+). Q239 contributes to the 4-imidazolone-5-propanoate binding site. A Fe(3+)-binding site is contributed by D311. Position 311 (D311) interacts with Zn(2+). 2 residues coordinate N-formimidoyl-L-glutamate: N313 and G315. 4-imidazolone-5-propanoate is bound at residue T316.

The protein belongs to the metallo-dependent hydrolases superfamily. HutI family. Requires Zn(2+) as cofactor. Fe(3+) serves as cofactor.

The protein localises to the cytoplasm. It catalyses the reaction 4-imidazolone-5-propanoate + H2O = N-formimidoyl-L-glutamate. The protein operates within amino-acid degradation; L-histidine degradation into L-glutamate; N-formimidoyl-L-glutamate from L-histidine: step 3/3. Its function is as follows. Catalyzes the hydrolytic cleavage of the carbon-nitrogen bond in imidazolone-5-propanoate to yield N-formimidoyl-L-glutamate. It is the third step in the universal histidine degradation pathway. The chain is Imidazolonepropionase from Acinetobacter baumannii (strain AB0057).